The sequence spans 143 residues: Pre-mRNA-splicing factor U5-Cwc21 (143 aa).

The CWF21 domain occupies 27–70; it reads EHHRSLRAIKLKVLLYREEREAAGVPPDVISRECATLHGSLLRN.

The protein belongs to the CWC21 family. Associates with the NTC complex (or PRP19-associated complex). The NTC complex associates with the spliceosome after the release of the U1 and U4 snRNAs and forms the CWC spliceosome subcomplex reminiscent of a late-stage spliceosome. Associates specifically with U5-containing snRNPs.

It localises to the cytoplasm. It is found in the nucleus. In terms of biological role, essential protein involved in pre-mRNA cis- and trans-splicing. May function at or prior to the first catalytic step of splicing at the catalytic center of the spliceosome. May do so by stabilizing the catalytic center or the position of the RNA substrate. The polypeptide is Pre-mRNA-splicing factor U5-Cwc21 (Trypanosoma brucei brucei (strain 927/4 GUTat10.1)).